The sequence spans 186 residues: Acireductone dioxygenase (186 aa).

Positions 103, 105, 109, and 147 each coordinate Fe(2+). Positions 103, 105, 109, and 147 each coordinate Ni(2+).

The protein belongs to the acireductone dioxygenase (ARD) family. Monomer. Fe(2+) serves as cofactor. Ni(2+) is required as a cofactor.

The catalysed reaction is 1,2-dihydroxy-5-(methylsulfanyl)pent-1-en-3-one + O2 = 3-(methylsulfanyl)propanoate + CO + formate + 2 H(+). It carries out the reaction 1,2-dihydroxy-5-(methylsulfanyl)pent-1-en-3-one + O2 = 4-methylsulfanyl-2-oxobutanoate + formate + 2 H(+). Its pathway is amino-acid biosynthesis; L-methionine biosynthesis via salvage pathway; L-methionine from S-methyl-5-thio-alpha-D-ribose 1-phosphate: step 5/6. Its function is as follows. Catalyzes 2 different reactions between oxygen and the acireductone 1,2-dihydroxy-3-keto-5-methylthiopentene (DHK-MTPene) depending upon the metal bound in the active site. Fe-containing acireductone dioxygenase (Fe-ARD) produces formate and 2-keto-4-methylthiobutyrate (KMTB), the alpha-ketoacid precursor of methionine in the methionine recycle pathway. Ni-containing acireductone dioxygenase (Ni-ARD) produces methylthiopropionate, carbon monoxide and formate, and does not lie on the methionine recycle pathway. The polypeptide is Acireductone dioxygenase (Parasynechococcus marenigrum (strain WH8102)).